The following is a 138-amino-acid chain: Large ribosomal subunit protein uL16 (138 aa).

Over residues 1–13 (MLQPSRRKYRKEQ) the composition is skewed to basic residues. Residues 1–24 (MLQPSRRKYRKEQKGRNTGLASRG) are disordered.

This sequence belongs to the universal ribosomal protein uL16 family. As to quaternary structure, part of the 50S ribosomal subunit.

Functionally, binds 23S rRNA and is also seen to make contacts with the A and possibly P site tRNAs. The polypeptide is Large ribosomal subunit protein uL16 (Bordetella bronchiseptica (strain ATCC BAA-588 / NCTC 13252 / RB50) (Alcaligenes bronchisepticus)).